The following is a 566-amino-acid chain: Phenylalanine--tRNA ligase beta subunit (566 aa).

The 76-residue stretch at 287–362 folds into the B5 domain; it reads YFQEEVEFNV…IGEGLSSFNP (76 aa). Residues aspartate 340, aspartate 346, glutamate 349, and aspartate 350 each contribute to the Mg(2+) site.

This sequence belongs to the phenylalanyl-tRNA synthetase beta subunit family. Type 2 subfamily. Tetramer of two alpha and two beta subunits. The cofactor is Mg(2+).

It is found in the cytoplasm. The enzyme catalyses tRNA(Phe) + L-phenylalanine + ATP = L-phenylalanyl-tRNA(Phe) + AMP + diphosphate + H(+). The protein is Phenylalanine--tRNA ligase beta subunit of Borreliella burgdorferi (strain ZS7) (Borrelia burgdorferi).